Consider the following 473-residue polypeptide: ATP synthase subunit beta (473 aa).

158–165 contributes to the ATP binding site; sequence GGAGVGKT.

This sequence belongs to the ATPase alpha/beta chains family. In terms of assembly, F-type ATPases have 2 components, CF(1) - the catalytic core - and CF(0) - the membrane proton channel. CF(1) has five subunits: alpha(3), beta(3), gamma(1), delta(1), epsilon(1). CF(0) has three main subunits: a(1), b(2) and c(9-12). The alpha and beta chains form an alternating ring which encloses part of the gamma chain. CF(1) is attached to CF(0) by a central stalk formed by the gamma and epsilon chains, while a peripheral stalk is formed by the delta and b chains.

It is found in the cell membrane. The enzyme catalyses ATP + H2O + 4 H(+)(in) = ADP + phosphate + 5 H(+)(out). Functionally, produces ATP from ADP in the presence of a proton gradient across the membrane. The catalytic sites are hosted primarily by the beta subunits. The polypeptide is ATP synthase subunit beta (Priestia megaterium (strain ATCC 12872 / QMB1551) (Bacillus megaterium)).